Here is a 44-residue protein sequence, read N- to C-terminus: Homeobox protein DLX-1 (44 aa).

Residues 19-44 form a disordered region; the sequence is RALSAGSPPVPPGWNRIPPLGRAQEE.

The protein belongs to the distal-less homeobox family. Interacts with SMAD4 (via homeobox DNA-binding domain). Interacts (via homeobox DNA-binding domain) with POU4F2; this interaction suppresses DLX1-mediated transcriptional activity in postnatal retina and enhances retinal ganglion cell (RGC) differentiation.

The protein resides in the nucleus. Plays a role as a transcriptional activator or repressor. Inhibits several cytokine signaling pathways, such as TGFB1, activin-A/INHBA and BMP4 by interfering with the transcriptional stimulatory activity of transcription factors, such as MSX2, FAST2, SMAD2 and SMAD3 during hematopoietic cell differentiation. Plays a role in terminal differentiation of interneurons, such as amacrine and bipolar cells in the developing retina. Likely to play a regulatory role in the development of the ventral forebrain. May play a role in craniofacial patterning and morphogenesis and may be involved in the early development of diencephalic subdivisions. The chain is Homeobox protein DLX-1 (Dlx1) from Rattus norvegicus (Rat).